Consider the following 416-residue polypeptide: Probable glucan 1,3-beta-glucosidase A (416 aa).

Residues M1–A22 form the signal peptide. The active-site Proton donor is the E211. 2 cysteine pairs are disulfide-bonded: C291–C415 and C316–C342. E308 functions as the Nucleophile in the catalytic mechanism.

The protein belongs to the glycosyl hydrolase 5 (cellulase A) family. Monomer. It depends on Mn(2+) as a cofactor.

It localises to the secreted. It carries out the reaction Successive hydrolysis of beta-D-glucose units from the non-reducing ends of (1-&gt;3)-beta-D-glucans, releasing alpha-glucose.. Functionally, beta-glucanases participate in the metabolism of beta-glucan, the main structural component of the cell wall. It could also function biosynthetically as a transglycosylase. The protein is Probable glucan 1,3-beta-glucosidase A (exgA) of Neosartorya fischeri (strain ATCC 1020 / DSM 3700 / CBS 544.65 / FGSC A1164 / JCM 1740 / NRRL 181 / WB 181) (Aspergillus fischerianus).